Here is a 451-residue protein sequence, read N- to C-terminus: Phosphoglucosamine mutase (451 aa).

The Phosphoserine intermediate role is filled by S101. S101, D240, D242, and D244 together coordinate Mg(2+). S101 is subject to Phosphoserine.

The protein belongs to the phosphohexose mutase family. Requires Mg(2+) as cofactor. Activated by phosphorylation.

It catalyses the reaction alpha-D-glucosamine 1-phosphate = D-glucosamine 6-phosphate. Functionally, catalyzes the conversion of glucosamine-6-phosphate to glucosamine-1-phosphate. The protein is Phosphoglucosamine mutase of Thioalkalivibrio sulfidiphilus (strain HL-EbGR7).